Here is a 455-residue protein sequence, read N- to C-terminus: MFARFCKAIPAKGRAFPSVNASIQSRLMATVRNQRVPHERATFTIRDGPIFHGKSFGARTNISGEAVFTTSLVGYPESLTDPSYRGQILVFTQPLIGNYGVPSAERDQHGLLKYFESPHLQAAGVVVADVAEQYSHWTAVESLGEWCAREGVPAISGVDTRAIVTYLREQGSSLARITVGEEYDADQDEAFTDPEQIHLVRQVSTKAPFHVSAADPQCHVAVIDCGVKENILRSLVSRGASITVFPFDYPIHKVAHHFDGVFISNGPGDPTHCQDTTYHLRRLMETSQVPIFGICLGHQLLALAAGARTIKLKYGNRAHNIPALDMSTGRCHITSQNHGYAVDVDTLPSDWKPYFVNLNDSSNEGMIHKSRPIFSTQFHPEAKGGPLDSSYLFDIYIDSVRKYKANQAAFHPQRDSIPSPLLVDLLAKERVGVQPTIGMQNVQAAAAAAAVAAAA.

The N-terminal 28 residues, 1-28, are a transit peptide targeting the mitochondrion; it reads MFARFCKAIPAKGRAFPSVNASIQSRLM. Residues 219–406 enclose the Glutamine amidotransferase type-1 domain; the sequence is HVAVIDCGVK…IDSVRKYKAN (188 aa). Cys-295 acts as the Nucleophile in catalysis. Active-site residues include His-379 and Glu-381.

The protein belongs to the CarA family. In terms of assembly, heterodimer composed of 2 chains; the small (or glutamine) chain promotes the hydrolysis of glutamine to ammonia, which is used by the large (or ammonia) chain to synthesize carbamoyl phosphate.

It localises to the mitochondrion matrix. The catalysed reaction is hydrogencarbonate + L-glutamine + 2 ATP + H2O = carbamoyl phosphate + L-glutamate + 2 ADP + phosphate + 2 H(+). It catalyses the reaction L-glutamine + H2O = L-glutamate + NH4(+). The protein operates within amino-acid biosynthesis; L-arginine biosynthesis; carbamoyl phosphate from bicarbonate: step 1/1. Functionally, small subunit of the arginine-specific carbamoyl phosphate synthase (CPSase). CPSase catalyzes the formation of carbamoyl phosphate from the ammonia moiety of glutamine, carbonate, and phosphate donated by ATP, the first step of the arginine biosynthetic pathway. The small subunit (glutamine amidotransferase) binds and cleaves glutamine to supply the large subunit with the substrate ammonia. The polypeptide is Carbamoyl phosphate synthase arginine-specific small chain (cpa1) (Aspergillus clavatus (strain ATCC 1007 / CBS 513.65 / DSM 816 / NCTC 3887 / NRRL 1 / QM 1276 / 107)).